Here is a 92-residue protein sequence, read N- to C-terminus: MGRSLKKGPFADDHLMKKIEVLNTDDKKQVIKTWSRRSTIFPTFVGHTVAVYDGRKHVPVYITEDMVGHKLGEFAPTRTYRGHAGDDKKTKR.

It belongs to the universal ribosomal protein uS19 family.

Functionally, protein S19 forms a complex with S13 that binds strongly to the 16S ribosomal RNA. The sequence is that of Small ribosomal subunit protein uS19 from Oceanobacillus iheyensis (strain DSM 14371 / CIP 107618 / JCM 11309 / KCTC 3954 / HTE831).